Consider the following 243-residue polypeptide: 23S rRNA (guanosine-2'-O-)-methyltransferase RlmB (243 aa).

Residues Gly196, Ile216, and Leu225 each coordinate S-adenosyl-L-methionine.

The protein belongs to the class IV-like SAM-binding methyltransferase superfamily. RNA methyltransferase TrmH family. RlmB subfamily. Homodimer.

The protein localises to the cytoplasm. The catalysed reaction is guanosine(2251) in 23S rRNA + S-adenosyl-L-methionine = 2'-O-methylguanosine(2251) in 23S rRNA + S-adenosyl-L-homocysteine + H(+). In terms of biological role, specifically methylates the ribose of guanosine 2251 in 23S rRNA. The polypeptide is 23S rRNA (guanosine-2'-O-)-methyltransferase RlmB (Salmonella typhimurium (strain LT2 / SGSC1412 / ATCC 700720)).